Reading from the N-terminus, the 196-residue chain is DNA replication complex GINS protein PSF1 (196 aa).

This sequence belongs to the GINS1/PSF1 family. In terms of assembly, component of the GINS complex which is a heterotetramer of GINS1, GINS2, GINS3 and GINS4. Forms a stable subcomplex with GINS4. GINS complex interacts with DNA primase in vitro. Component of the CMG helicase complex, a hexameric ring of related MCM2-7 subunits stabilized by CDC45 and the tetrameric GINS complex.

It localises to the nucleus. Its subcellular location is the chromosome. Functionally, required for correct functioning of the GINS complex, a complex that plays an essential role in the initiation of DNA replication, and progression of DNA replication forks. GINS complex is a core component of CDC45-MCM-GINS (CMG) helicase, the molecular machine that unwinds template DNA during replication, and around which the replisome is built. This Bos taurus (Bovine) protein is DNA replication complex GINS protein PSF1 (GINS1).